The chain runs to 160 residues: Large ribosomal subunit protein uL22c (160 aa).

Belongs to the universal ribosomal protein uL22 family. As to quaternary structure, part of the 50S ribosomal subunit.

It localises to the plastid. Its subcellular location is the chloroplast. In terms of biological role, this protein binds specifically to 23S rRNA. Its function is as follows. The globular domain of the protein is located near the polypeptide exit tunnel on the outside of the subunit, while an extended beta-hairpin is found that lines the wall of the exit tunnel in the center of the 70S ribosome. This chain is Large ribosomal subunit protein uL22c (rpl22), found in Eucalyptus globulus subsp. globulus (Tasmanian blue gum).